The sequence spans 1342 residues: DNA-directed RNA polymerase subunit beta (1342 aa).

Belongs to the RNA polymerase beta chain family. As to quaternary structure, the RNAP catalytic core consists of 2 alpha, 1 beta, 1 beta' and 1 omega subunit. When a sigma factor is associated with the core the holoenzyme is formed, which can initiate transcription.

It catalyses the reaction RNA(n) + a ribonucleoside 5'-triphosphate = RNA(n+1) + diphosphate. Functionally, DNA-dependent RNA polymerase catalyzes the transcription of DNA into RNA using the four ribonucleoside triphosphates as substrates. This chain is DNA-directed RNA polymerase subunit beta, found in Buchnera aphidicola subsp. Acyrthosiphon pisum (strain 5A).